We begin with the raw amino-acid sequence, 175 residues long: Nucleoside-triphosphatase THEP1 (175 aa).

Residues 15-22 (GNPGVGKT) and 106-113 (VLAIDEIG) each bind ATP.

It belongs to the THEP1 NTPase family.

It catalyses the reaction a ribonucleoside 5'-triphosphate + H2O = a ribonucleoside 5'-diphosphate + phosphate + H(+). Its function is as follows. Has nucleotide phosphatase activity towards ATP, GTP, CTP, TTP and UTP. May hydrolyze nucleoside diphosphates with lower efficiency. The protein is Nucleoside-triphosphatase THEP1 of Saccharolobus solfataricus (strain ATCC 35092 / DSM 1617 / JCM 11322 / P2) (Sulfolobus solfataricus).